The following is a 510-amino-acid chain: ATP synthase subunit alpha (510 aa).

ATP is bound at residue Gly169–Thr176.

Belongs to the ATPase alpha/beta chains family. In terms of assembly, F-type ATPases have 2 components, CF(1) - the catalytic core - and CF(0) - the membrane proton channel. CF(1) has five subunits: alpha(3), beta(3), gamma(1), delta(1), epsilon(1). CF(0) has three main subunits: a(1), b(2) and c(9-12). The alpha and beta chains form an alternating ring which encloses part of the gamma chain. CF(1) is attached to CF(0) by a central stalk formed by the gamma and epsilon chains, while a peripheral stalk is formed by the delta and b chains.

It is found in the cell membrane. The enzyme catalyses ATP + H2O + 4 H(+)(in) = ADP + phosphate + 5 H(+)(out). Functionally, produces ATP from ADP in the presence of a proton gradient across the membrane. The alpha chain is a regulatory subunit. The sequence is that of ATP synthase subunit alpha from Thermomicrobium roseum (strain ATCC 27502 / DSM 5159 / P-2).